The primary structure comprises 161 residues: Transcriptional repressor NrdR (161 aa).

Residues 1 to 11 (MRCPSCSSLDT) show a composition bias toward polar residues. A disordered region spans residues 1–20 (MRCPSCSSLDTQVKDSRPTE). The segment at 3–34 (CPSCSSLDTQVKDSRPTEDSAVIRRRRVCMAC) is a zinc-finger region. In terms of domain architecture, ATP-cone spans 49 to 139 (LTVIKRNGRR…VYRNFREAKD (91 aa)).

The protein belongs to the NrdR family. Requires Zn(2+) as cofactor.

Functionally, negatively regulates transcription of bacterial ribonucleotide reductase nrd genes and operons by binding to NrdR-boxes. The polypeptide is Transcriptional repressor NrdR (Rhodopseudomonas palustris (strain BisB18)).